Consider the following 991-residue polypeptide: Translation initiation factor IF-2 (991 aa).

Disordered regions lie at residues 53 to 85 (SHGT…KART), 97 to 175 (VKRD…EAAE), and 312 to 395 (GIKG…DRGG). 2 stretches are compositionally biased toward basic and acidic residues: residues 97–113 (VKRD…HDSQ) and 125–175 (ELQR…EAAE). The segment covering 323-338 (AAGAPAPGAAPGAAAK) has biased composition (low complexity). Positions 339–349 (PGEKKSVKSEK) are enriched in basic and acidic residues. Positions 491-658 (PRPPVVTVMG…QVLLQAEVLE (168 aa)) constitute a tr-type G domain. Residues 500-507 (GHVDHGKT) are G1. 500 to 507 (GHVDHGKT) serves as a coordination point for GTP. The tract at residues 525–529 (GITQH) is G2. Residues 546–549 (DTPG) form a G3 region. GTP is bound by residues 546–550 (DTPGH) and 600–603 (NKID). A G4 region spans residues 600-603 (NKID). A G5 region spans residues 636 to 638 (SAK).

Belongs to the TRAFAC class translation factor GTPase superfamily. Classic translation factor GTPase family. IF-2 subfamily.

The protein localises to the cytoplasm. Functionally, one of the essential components for the initiation of protein synthesis. Protects formylmethionyl-tRNA from spontaneous hydrolysis and promotes its binding to the 30S ribosomal subunits. Also involved in the hydrolysis of GTP during the formation of the 70S ribosomal complex. In Leptothrix cholodnii (strain ATCC 51168 / LMG 8142 / SP-6) (Leptothrix discophora (strain SP-6)), this protein is Translation initiation factor IF-2.